A 184-amino-acid polypeptide reads, in one-letter code: ATP-dependent protease subunit HslV (184 aa).

Residue Thr-11 is part of the active site. 3 residues coordinate Na(+): Ala-165, Cys-168, and Thr-171.

This sequence belongs to the peptidase T1B family. HslV subfamily. In terms of assembly, a double ring-shaped homohexamer of HslV is capped on each side by a ring-shaped HslU homohexamer. The assembly of the HslU/HslV complex is dependent on binding of ATP.

It localises to the cytoplasm. The enzyme catalyses ATP-dependent cleavage of peptide bonds with broad specificity.. With respect to regulation, allosterically activated by HslU binding. In terms of biological role, protease subunit of a proteasome-like degradation complex believed to be a general protein degrading machinery. In Zymomonas mobilis subsp. mobilis (strain ATCC 31821 / ZM4 / CP4), this protein is ATP-dependent protease subunit HslV.